Here is a 321-residue protein sequence, read N- to C-terminus: p-hydroxybenzoic acid efflux pump subunit AaeA (321 aa).

Residues 22 to 42 (VVITLVIVLCAIVAIFRVWAF) form a helical membrane-spanning segment.

Belongs to the membrane fusion protein (MFP) (TC 8.A.1) family.

The protein resides in the cell inner membrane. In terms of biological role, forms an efflux pump with AaeB. This is p-hydroxybenzoic acid efflux pump subunit AaeA from Pectobacterium atrosepticum (strain SCRI 1043 / ATCC BAA-672) (Erwinia carotovora subsp. atroseptica).